A 111-amino-acid polypeptide reads, in one-letter code: Large ribosomal subunit protein uL22 (111 aa).

The protein belongs to the universal ribosomal protein uL22 family. As to quaternary structure, part of the 50S ribosomal subunit.

This protein binds specifically to 23S rRNA; its binding is stimulated by other ribosomal proteins, e.g. L4, L17, and L20. It is important during the early stages of 50S assembly. It makes multiple contacts with different domains of the 23S rRNA in the assembled 50S subunit and ribosome. Its function is as follows. The globular domain of the protein is located near the polypeptide exit tunnel on the outside of the subunit, while an extended beta-hairpin is found that lines the wall of the exit tunnel in the center of the 70S ribosome. This is Large ribosomal subunit protein uL22 from Chlamydia trachomatis serovar L2b (strain UCH-1/proctitis).